Here is a 372-residue protein sequence, read N- to C-terminus: Beta-1,3-N-acetylglucosaminyltransferase radical fringe (372 aa).

Residues 1 to 10 (MNSSCLGLRR) lie on the Cytoplasmic side of the membrane. Residues 11–27 (TCFLLSVTAAAVLLLLL) form a helical; Signal-anchor for type II membrane protein membrane-spanning segment. The Lumenal portion of the chain corresponds to 28–372 (PRGQPPAAPR…TIWCPNKKMS (345 aa)). Residues 30–48 (GQPPAAPRRRPPPAGPSRP) show a composition bias toward pro residues. The tract at residues 30-96 (GQPPAAPRRR…RVRMGPPGGS (67 aa)) is disordered. Positions 64-78 (DRGGGSGAAGGGRGV) are enriched in gly residues. Residue Arg120 coordinates substrate. Asn159 is a glycosylation site (N-linked (GlcNAc...) asparagine). 2 cysteine pairs are disulfide-bonded: Cys160–Cys171 and Cys189–Cys253. Asp193 provides a ligand contact to substrate. Asp194 contacts Mn(2+). The active site involves Asp283. His307 serves as a coordination point for Mn(2+). A disulfide bridge connects residues Cys357 and Cys366.

The protein belongs to the glycosyltransferase 31 family. Mn(2+) is required as a cofactor.

The protein localises to the golgi apparatus membrane. It catalyses the reaction 3-O-(alpha-L-fucosyl)-L-threonyl-[EGF-like domain protein] + UDP-N-acetyl-alpha-D-glucosamine = 3-O-(N-acetyl-beta-D-glucosaminyl-(1-&gt;3)-alpha-L-fucosyl)-L-threonyl-[EGF-like domain protein] + UDP + H(+). The catalysed reaction is 3-O-(alpha-L-fucosyl)-L-seryl-[EGF-like domain protein] + UDP-N-acetyl-alpha-D-glucosamine = 3-O-(N-acetyl-beta-D-glucosaminyl-(1-&gt;3)-alpha-L-fucosyl)-L-seryl-[EGF-like domain protein] + UDP + H(+). Its function is as follows. Glycosyltransferase that initiates the elongation of O-linked fucose residues attached to EGF-like repeats in the extracellular domain of Notch molecules. Plays an important role in limb outgrowth, it directs the formation and positioning of the apical ectodermal ridge (AER), one of the key organizer centers of vertebrate limb development. This is Beta-1,3-N-acetylglucosaminyltransferase radical fringe (RFNG) from Gallus gallus (Chicken).